A 261-amino-acid polypeptide reads, in one-letter code: tRNA pseudouridine synthase A (261 aa).

The active-site Nucleophile is the Asp52. Tyr111 serves as a coordination point for substrate.

Belongs to the tRNA pseudouridine synthase TruA family. Homodimer.

It catalyses the reaction uridine(38/39/40) in tRNA = pseudouridine(38/39/40) in tRNA. Functionally, formation of pseudouridine at positions 38, 39 and 40 in the anticodon stem and loop of transfer RNAs. In Jannaschia sp. (strain CCS1), this protein is tRNA pseudouridine synthase A.